Consider the following 172-residue polypeptide: Alpha-crystallin A chain (172 aa).

Position 1 is an N-acetylmethionine (M1). The tract at residues 1–63 is required for complex formation with BFSP1 and BFSP2; sequence MDVTIQHPWF…RTVLDSGISE (63 aa). Residue Q6 is modified to Deamidated glutamine; partial. Position 45 is a phosphoserine (S45). Position 50 is a deamidated glutamine; partial (Q50). A sHSP domain is found at 52 to 163; sequence LFRTVLDSGI…HERAIPVARE (112 aa). K70 bears the N6-acetyllysine mark. Residue Q90 is modified to Deamidated glutamine; partial. At K99 the chain carries N6-acetyllysine. H100 serves as a coordination point for Zn(2+). Position 101 is a deamidated asparagine; partial (N101). Zn(2+)-binding residues include E102 and H107. S122 is modified (phosphoserine). A Deamidated asparagine; partial modification is found at N123. Q147 bears the Deamidated glutamine; partial mark. A Zn(2+)-binding site is contributed by H154. Residue S168 is glycosylated (O-linked (GlcNAc) serine).

This sequence belongs to the small heat shock protein (HSP20) family. Heteromer composed of three CRYAA and one CRYAB subunits. Inter-subunit bridging via zinc ions enhances stability, which is crucial as there is no protein turn over in the lens. Can also form homodimers and homotetramers (dimers of dimers) which serve as the building blocks of homooligomers. Within homooligomers, the zinc-binding motif is created from residues of 3 different molecules. His-100 and Glu-102 from one molecule are ligands of the zinc ion, and His-107 and His-154 residues from additional molecules complete the site with tetrahedral coordination geometry. Part of a complex required for lens intermediate filament formation composed of BFSP1, BFSP2 and CRYAA. Acetylation at Lys-70 may increase chaperone activity. Post-translationally, undergoes age-dependent proteolytical cleavage at the C-terminus.

It localises to the cytoplasm. The protein resides in the nucleus. Contributes to the transparency and refractive index of the lens. Acts as a chaperone, preventing aggregation of various proteins under a wide range of stress conditions. Required for the correct formation of lens intermediate filaments as part of a complex composed of BFSP1, BFSP2 and CRYAA. The sequence is that of Alpha-crystallin A chain (CRYAA) from Macaca mulatta (Rhesus macaque).